The primary structure comprises 156 residues: 6,7-dimethyl-8-ribityllumazine synthase (156 aa).

5-amino-6-(D-ribitylamino)uracil contacts are provided by residues Phe-22, 57-59, and 81-83; these read AYE and TVI. 86–87 provides a ligand contact to (2S)-2-hydroxy-3-oxobutyl phosphate; it reads GT. Catalysis depends on His-89, which acts as the Proton donor. Phe-114 provides a ligand contact to 5-amino-6-(D-ribitylamino)uracil. Arg-128 contacts (2S)-2-hydroxy-3-oxobutyl phosphate.

The protein belongs to the DMRL synthase family. As to quaternary structure, forms an icosahedral capsid composed of 60 subunits, arranged as a dodecamer of pentamers.

It carries out the reaction (2S)-2-hydroxy-3-oxobutyl phosphate + 5-amino-6-(D-ribitylamino)uracil = 6,7-dimethyl-8-(1-D-ribityl)lumazine + phosphate + 2 H2O + H(+). The protein operates within cofactor biosynthesis; riboflavin biosynthesis; riboflavin from 2-hydroxy-3-oxobutyl phosphate and 5-amino-6-(D-ribitylamino)uracil: step 1/2. Catalyzes the formation of 6,7-dimethyl-8-ribityllumazine by condensation of 5-amino-6-(D-ribitylamino)uracil with 3,4-dihydroxy-2-butanone 4-phosphate. This is the penultimate step in the biosynthesis of riboflavin. This chain is 6,7-dimethyl-8-ribityllumazine synthase, found in Citrobacter koseri (strain ATCC BAA-895 / CDC 4225-83 / SGSC4696).